The sequence spans 113 residues: Large ribosomal subunit protein bL17 (113 aa).

The protein belongs to the bacterial ribosomal protein bL17 family. As to quaternary structure, part of the 50S ribosomal subunit. Contacts protein L32.

In Symbiobacterium thermophilum (strain DSM 24528 / JCM 14929 / IAM 14863 / T), this protein is Large ribosomal subunit protein bL17.